Consider the following 435-residue polypeptide: Asparagine--tRNA ligase (435 aa).

It belongs to the class-II aminoacyl-tRNA synthetase family. Homodimer.

It localises to the cytoplasm. The enzyme catalyses tRNA(Asn) + L-asparagine + ATP = L-asparaginyl-tRNA(Asn) + AMP + diphosphate + H(+). This chain is Asparagine--tRNA ligase, found in Leptospira interrogans serogroup Icterohaemorrhagiae serovar Lai (strain 56601).